Consider the following 509-residue polypeptide: MLLLKQISPPFHLHQLRRRISTIISAGFTLNLPKLEPSSDAELISQMLITNHNPFHFMESSLQLNGISLTPNLIHQTLLRLRHNSKIALSFFQYLRSLPSPSTTPTSFNLIIDILGRVRQFDVVRQLIVEMDQTSPETFLILVKRLIAAGLTRQAVRAFDDAPCFLENRRFRLVEFGFLLDTLCKYGYTKMAVGVFNERKEEFGSDEKVYTILIAGWCKLRRIDMAEKFLVEMIESGIEPNVVTYNVLLNGICRTASLHPEERFERNVRNAEKVFDEMRQRGIEPDVTSFSIVLHMYSRAHKAELTLDKMKLMKAKGISPTIETYTSVVKCLCSCGRLEEAEELLETMVESGISPSSATYNCFFKEYKGRKDANGAMNLYRKMKNGLCKPSTQTYNVLLGTFINLGKMETVKEIWDDLKASETGPDLDSYTSLVHGLCSKEKWKEACGYFVEMIERGFLPQKLTFETLYKGLIQSNKMRTWRRLKKKLDEESITFGSEFQRYPFEPYKR.

The N-terminal 19 residues, 1-19 (MLLLKQISPPFHLHQLRRR), are a transit peptide targeting the mitochondrion. 8 PPR repeats span residues 172-202 (RLVE…RKEE), 206-240 (DEKV…GIEP), 241-285 (NVVT…GIEP), 286-320 (DVTS…GISP), 321-355 (TIET…GISP), 356-390 (SSAT…LCKP), 391-425 (STQT…ETGP), and 426-460 (DLDS…GFLP).

The protein belongs to the PPR family. P subfamily.

It localises to the mitochondrion. This is Pentatricopeptide repeat-containing protein At2g13420, mitochondrial from Arabidopsis thaliana (Mouse-ear cress).